A 334-amino-acid chain; its full sequence is tRNA uridine(34) hydroxylase (334 aa).

The 95-residue stretch at 123–217 (SDPDVILVDT…YLEEVKAEES (95 aa)) folds into the Rhodanese domain. The active-site Cysteine persulfide intermediate is Cys-177.

The protein belongs to the TrhO family.

It carries out the reaction uridine(34) in tRNA + AH2 + O2 = 5-hydroxyuridine(34) in tRNA + A + H2O. Catalyzes oxygen-dependent 5-hydroxyuridine (ho5U) modification at position 34 in tRNAs. The protein is tRNA uridine(34) hydroxylase of Shewanella baltica (strain OS195).